A 59-amino-acid chain; its full sequence is Large ribosomal subunit protein bL32 (59 aa).

The interval 1–20 (MAVPRNRHSNARKNIRRSHH) is disordered.

It belongs to the bacterial ribosomal protein bL32 family.

This chain is Large ribosomal subunit protein bL32 (rpmF), found in Chlamydia muridarum (strain MoPn / Nigg).